Consider the following 594-residue polypeptide: MNETITNKLALLPDKPGCYLMKDRQGTIIYVGKAKVLKNRVRSYFTGSHDSKTQRLVGEICDFEYIVTSSNIEALILELTLIKKHDPKYNVLLKDDKTYPYIKITNERHPRLLITRKVKKDGAKYFGPYPNAGAATETKKLLDRLYPLRKCRKMPDSVCLYYHIGQCLAPCVYEVSEETNQTMVNEITKFLKNGHSDIKEQLRERMEKAAEDLDFERAKELRDTIAQMEKVMEKQKMAFADKTDRDVFGFSYDKGWMCVQVFFIRQGRLIERDVSIFPFYQEASEELLTFIARFYLEKNHIKPKEIFVAESVDKQLLKELLETRVTQPKRGQKKALLDLAEENAALALKEKFSLIERDEQRTVKAVERLGEAIGINAPYRIEAFDNSNIQGVDPVSAMVVFVNGVPQRKEYRKYKIKTVEGPDDYGSMREVVRRRYVRLLKEKRPLPDLIVIDGGAGQIAAAKEVIEDELGQAIPVCGLAKDDKHRTSQLLMGSPPVVVPLQRDSHEFYLLQRIQDEVHRFAITFHRQTRAKSFLQSALDDIPGVGEKRRKALLKTFGSVKKIKEASIEDLSKHVPTKLAETIHHTLNKNKPNA.

Positions 14–91 (DKPGCYLMKD…IKKHDPKYNV (78 aa)) constitute a GIY-YIG domain. Positions 196-231 (SDIKEQLRERMEKAAEDLDFERAKELRDTIAQMEKV) constitute a UVR domain.

It belongs to the UvrC family. As to quaternary structure, interacts with UvrB in an incision complex.

The protein localises to the cytoplasm. The UvrABC repair system catalyzes the recognition and processing of DNA lesions. UvrC both incises the 5' and 3' sides of the lesion. The N-terminal half is responsible for the 3' incision and the C-terminal half is responsible for the 5' incision. The sequence is that of UvrABC system protein C from Shouchella clausii (strain KSM-K16) (Alkalihalobacillus clausii).